The chain runs to 172 residues: MNHFELFGLVEGFELDTRKLADTYRQLQTQFHPDRFATAPEREQLVAVQRAAQINDAYTTLKTPLRRAEYLLSLRGTDIRGEQQTLQDTSFLMQQLEWRERLADLKGEADPEGAIKDFRQEIGHDHQLLMQQLTLTLAAGDDLIAADCVRKLKFVDKLLEELERFEDSLFES.

Residues 2–74 form the J domain; that stretch reads NHFELFGLVE…LRRAEYLLSL (73 aa).

It belongs to the HscB family. In terms of assembly, interacts with HscA and stimulates its ATPase activity.

Its function is as follows. Co-chaperone involved in the maturation of iron-sulfur cluster-containing proteins. Seems to help targeting proteins to be folded toward HscA. The sequence is that of Co-chaperone protein HscB homolog from Aeromonas salmonicida (strain A449).